A 196-amino-acid polypeptide reads, in one-letter code: Ribosome maturation factor RimP (196 aa).

A disordered region spans residues 163 to 196 (GLAPSKPTGPAPKRPKPNTNSSSNEPAAKKPRAE).

It belongs to the RimP family.

It localises to the cytoplasm. In terms of biological role, required for maturation of 30S ribosomal subunits. This Stenotrophomonas maltophilia (strain K279a) protein is Ribosome maturation factor RimP.